The primary structure comprises 162 residues: Ribosome-binding factor A (162 aa).

A disordered region spans residues 121 to 162 (DEVARVAAGASPAGDPDPYKEPRAEDADDAEVDEPSGSRQAD). A compositionally biased stretch (low complexity) spans 125–136 (RVAAGASPAGDP).

It belongs to the RbfA family. In terms of assembly, monomer. Binds 30S ribosomal subunits, but not 50S ribosomal subunits or 70S ribosomes.

It is found in the cytoplasm. One of several proteins that assist in the late maturation steps of the functional core of the 30S ribosomal subunit. Associates with free 30S ribosomal subunits (but not with 30S subunits that are part of 70S ribosomes or polysomes). Required for efficient processing of 16S rRNA. May interact with the 5'-terminal helix region of 16S rRNA. This chain is Ribosome-binding factor A, found in Rhodococcus jostii (strain RHA1).